We begin with the raw amino-acid sequence, 188 residues long: Large ribosomal subunit protein bL9 (188 aa).

Residues 149-170 show a composition bias toward basic and acidic residues; it reads RSEEEAERQARGEEIGVEKEEP. The tract at residues 149 to 188 is disordered; sequence RSEEEAERQARGEEIGVEKEEPSGFVEEALEETVEAPAEA.

Belongs to the bacterial ribosomal protein bL9 family.

Binds to the 23S rRNA. The sequence is that of Large ribosomal subunit protein bL9 from Gluconacetobacter diazotrophicus (strain ATCC 49037 / DSM 5601 / CCUG 37298 / CIP 103539 / LMG 7603 / PAl5).